A 114-amino-acid polypeptide reads, in one-letter code: Small ribosomal subunit protein bS6 (114 aa).

The protein belongs to the bacterial ribosomal protein bS6 family.

Binds together with bS18 to 16S ribosomal RNA. The chain is Small ribosomal subunit protein bS6 from Bacteroides fragilis (strain YCH46).